Consider the following 842-residue polypeptide: Elongation factor 2 (842 aa).

The 237-residue stretch at 17–253 (TNVRNMSVIA…LWGDSYFNPK (237 aa)) folds into the tr-type G domain. GTP is bound by residues 26–33 (AHVDHGKS), 158–161 (NKVD), and 213–215 (SGL). Position 699 is a diphthamide (His-699).

The protein belongs to the TRAFAC class translation factor GTPase superfamily. Classic translation factor GTPase family. EF-G/EF-2 subfamily.

The protein localises to the cytoplasm. It catalyses the reaction GTP + H2O = GDP + phosphate + H(+). Its function is as follows. Catalyzes the GTP-dependent ribosomal translocation step during translation elongation. During this step, the ribosome changes from the pre-translocational (PRE) to the post-translocational (POST) state as the newly formed A-site-bound peptidyl-tRNA and P-site-bound deacylated tRNA move to the P and E sites, respectively. Catalyzes the coordinated movement of the two tRNA molecules, the mRNA and conformational changes in the ribosome. The protein is Elongation factor 2 (EFT1) of Debaryomyces hansenii (strain ATCC 36239 / CBS 767 / BCRC 21394 / JCM 1990 / NBRC 0083 / IGC 2968) (Yeast).